The sequence spans 297 residues: uncharacterized protein (297 aa).

A disordered region spans residues 1–44 (MQKSKSIFIPKAFAPQQQAQAPPSKLDNKDPSVEGEGASKPKDD). A compositionally biased stretch (low complexity) spans 10 to 23 (PKAFAPQQQAQAPP). Over residues 26-44 (LDNKDPSVEGEGASKPKDD) the composition is skewed to basic and acidic residues.

This is an uncharacterized protein from Invertebrate iridescent virus 3 (IIV-3).